Reading from the N-terminus, the 206-residue chain is Cell division protein SepF (206 aa).

Over residues 31–53 the composition is skewed to basic and acidic residues; sequence EEKERRKTERQEQRQAVKQEKRT. The segment at 31 to 81 is disordered; sequence EEKERRKTERQEQRQAVKQEKRTFPSQRPAFSEEAPTSSSSKLSAASGSSD. Residues 60-80 are compositionally biased toward low complexity; the sequence is AFSEEAPTSSSSKLSAASGSS.

The protein belongs to the SepF family. In terms of assembly, homodimer. Interacts with FtsZ.

It is found in the cytoplasm. In terms of biological role, cell division protein that is part of the divisome complex and is recruited early to the Z-ring. Probably stimulates Z-ring formation, perhaps through the cross-linking of FtsZ protofilaments. Its function overlaps with FtsA. The protein is Cell division protein SepF of Lachnoclostridium phytofermentans (strain ATCC 700394 / DSM 18823 / ISDg) (Clostridium phytofermentans).